The following is a 143-amino-acid chain: Large ribosomal subunit protein uL11 (143 aa).

Belongs to the universal ribosomal protein uL11 family. As to quaternary structure, part of the ribosomal stalk of the 50S ribosomal subunit. Interacts with L10 and the large rRNA to form the base of the stalk. L10 forms an elongated spine to which L12 dimers bind in a sequential fashion forming a multimeric L10(L12)X complex. One or more lysine residues are methylated.

Functionally, forms part of the ribosomal stalk which helps the ribosome interact with GTP-bound translation factors. The polypeptide is Large ribosomal subunit protein uL11 (Cupriavidus pinatubonensis (strain JMP 134 / LMG 1197) (Cupriavidus necator (strain JMP 134))).